Consider the following 363-residue polypeptide: Peptide chain release factor 1 (363 aa).

Gln-237 is modified (N5-methylglutamine). Residues 284–296 (EDEKRRSAEESTR) show a composition bias toward basic and acidic residues. Residues 284-306 (EDEKRRSAEESTRRSLVASGDRS) are disordered.

Belongs to the prokaryotic/mitochondrial release factor family. Methylated by PrmC. Methylation increases the termination efficiency of RF1.

Its subcellular location is the cytoplasm. In terms of biological role, peptide chain release factor 1 directs the termination of translation in response to the peptide chain termination codons UAG and UAA. In Shewanella putrefaciens (strain CN-32 / ATCC BAA-453), this protein is Peptide chain release factor 1.